The chain runs to 94 residues: MTKSELIAQLAERFPQLVAKDADFAVKMILDAMSEALVRGDRIEIRGFGSFALNYRPPRVGRNPKSGEKVSVPAKWVPHFKAGKELRERVDQAI.

It belongs to the bacterial histone-like protein family. Heterodimer of an alpha and a beta chain.

In terms of biological role, this protein is one of the two subunits of integration host factor, a specific DNA-binding protein that functions in genetic recombination as well as in transcriptional and translational control. The polypeptide is Integration host factor subunit beta (Dechloromonas aromatica (strain RCB)).